Consider the following 237-residue polypeptide: Ribosomal RNA small subunit methyltransferase G (237 aa).

S-adenosyl-L-methionine-binding positions include glycine 76, phenylalanine 81, valine 128–glutamate 129, and arginine 147.

This sequence belongs to the methyltransferase superfamily. RNA methyltransferase RsmG family.

Its subcellular location is the cytoplasm. Functionally, specifically methylates the N7 position of a guanine in 16S rRNA. The sequence is that of Ribosomal RNA small subunit methyltransferase G from Prochlorococcus marinus (strain AS9601).